Consider the following 142-residue polypeptide: Ribosome maturation factor RimP (142 aa).

This sequence belongs to the RimP family.

Its subcellular location is the cytoplasm. Its function is as follows. Required for maturation of 30S ribosomal subunits. The sequence is that of Ribosome maturation factor RimP from Nitratiruptor sp. (strain SB155-2).